A 346-amino-acid chain; its full sequence is Aspartate-semialdehyde dehydrogenase (346 aa).

Residues 10 to 13 and 38 to 39 contribute to the NADP(+) site; these read TGQG and RS. Arginine 98 serves as a coordination point for phosphate. Residue cysteine 131 is the Acyl-thioester intermediate of the active site. Glutamine 158 is a binding site for substrate. 161-162 provides a ligand contact to NADP(+); that stretch reads SG. Lysine 228 contacts phosphate. Arginine 250 contributes to the substrate binding site. Residue histidine 257 is the Proton acceptor of the active site. Asparagine 326 contacts NADP(+).

The protein belongs to the aspartate-semialdehyde dehydrogenase family. As to quaternary structure, homodimer.

It carries out the reaction L-aspartate 4-semialdehyde + phosphate + NADP(+) = 4-phospho-L-aspartate + NADPH + H(+). Its pathway is amino-acid biosynthesis; L-lysine biosynthesis via DAP pathway; (S)-tetrahydrodipicolinate from L-aspartate: step 2/4. It functions in the pathway amino-acid biosynthesis; L-methionine biosynthesis via de novo pathway; L-homoserine from L-aspartate: step 2/3. It participates in amino-acid biosynthesis; L-threonine biosynthesis; L-threonine from L-aspartate: step 2/5. Catalyzes the NADPH-dependent formation of L-aspartate-semialdehyde (L-ASA) by the reductive dephosphorylation of L-aspartyl-4-phosphate. In Mycolicibacterium smegmatis (Mycobacterium smegmatis), this protein is Aspartate-semialdehyde dehydrogenase.